The following is a 624-amino-acid chain: DNA mismatch repair protein MutL (624 aa).

Residues 340–355 (NKLDTDSHSQSHERGH) show a composition bias toward basic and acidic residues. A disordered region spans residues 340–415 (NKLDTDSHSQ…RGGATSSYRQ (76 aa)). Composition is skewed to polar residues over residues 372-383 (HQTAPSTKASTE) and 391-415 (SPIS…SYRQ).

The protein belongs to the DNA mismatch repair MutL/HexB family.

Functionally, this protein is involved in the repair of mismatches in DNA. It is required for dam-dependent methyl-directed DNA mismatch repair. May act as a 'molecular matchmaker', a protein that promotes the formation of a stable complex between two or more DNA-binding proteins in an ATP-dependent manner without itself being part of a final effector complex. The chain is DNA mismatch repair protein MutL from Shewanella sediminis (strain HAW-EB3).